Reading from the N-terminus, the 251-residue chain is WUSCHEL-related homeobox 4 (251 aa).

2 disordered regions span residues M1–S21 and L33–P93. A compositionally biased stretch (low complexity) spans S11–S21. Residues K71 to E83 are compositionally biased toward basic and acidic residues. The homeobox; WUS-type DNA-binding region spans P86–Q150.

This sequence belongs to the WUS homeobox family. As to expression, expressed in the vasculature of the whole plant (roots, hypocotyls, cotyledons and leaves), trichomes and stomata. Expresse in the developing vascular bundles of root and shoot lateral organs.

The protein localises to the nucleus. Promotes differentiation and/or maintenance of the vascular procambium, the initial cells of the developing vasculature. Part of the TDIF-TDR-WOX4 signaling pathway that plays a crucial role in the maintenance of the vascular meristem organization during secondary growth. Is required for promoting the proliferation of procambial/cambial stem cells but not for repressing their commitment to xylem differentiation in response to the TDIF signal. Acts redundantly with WOX14 downstream of the TDR/PXY receptor kinase to regulate procambial cell proliferation and differentiation in vascular tissue, independently of any role in vascular. Acts as a cambium regulator in the inflorescence stem. Is required for auxin-dependent cambium stimulation in the inflorescence stem. The polypeptide is WUSCHEL-related homeobox 4 (WOX4) (Arabidopsis thaliana (Mouse-ear cress)).